The sequence spans 506 residues: 2-isopropylmalate synthase (506 aa).

A Pyruvate carboxyltransferase domain is found at 4 to 266 (ILFMDTTLRD…EPSMTLKEIK (263 aa)). Residues D13, H201, H203, and N237 each contribute to the Mn(2+) site. Residues 390–506 (NITQLQVHFV…KLKSFIQLVK (117 aa)) are regulatory domain.

It belongs to the alpha-IPM synthase/homocitrate synthase family. LeuA type 1 subfamily. Homodimer. Mn(2+) serves as cofactor.

It localises to the cytoplasm. It catalyses the reaction 3-methyl-2-oxobutanoate + acetyl-CoA + H2O = (2S)-2-isopropylmalate + CoA + H(+). It functions in the pathway amino-acid biosynthesis; L-leucine biosynthesis; L-leucine from 3-methyl-2-oxobutanoate: step 1/4. Its function is as follows. Catalyzes the condensation of the acetyl group of acetyl-CoA with 3-methyl-2-oxobutanoate (2-ketoisovalerate) to form 3-carboxy-3-hydroxy-4-methylpentanoate (2-isopropylmalate). The polypeptide is 2-isopropylmalate synthase (Bacillus cereus (strain ZK / E33L)).